Here is a 96-residue protein sequence, read N- to C-terminus: Co-chaperonin GroES (96 aa).

Belongs to the GroES chaperonin family. In terms of assembly, heptamer of 7 subunits arranged in a ring. Interacts with the chaperonin GroEL.

The protein localises to the cytoplasm. Together with the chaperonin GroEL, plays an essential role in assisting protein folding. The GroEL-GroES system forms a nano-cage that allows encapsulation of the non-native substrate proteins and provides a physical environment optimized to promote and accelerate protein folding. GroES binds to the apical surface of the GroEL ring, thereby capping the opening of the GroEL channel. The protein is Co-chaperonin GroES of Methylobacillus flagellatus (strain ATCC 51484 / DSM 6875 / VKM B-1610 / KT).